The primary structure comprises 290 residues: Cilia- and flagella-associated protein 298 (290 aa).

Residue Tyr-264 is modified to Phosphotyrosine.

It belongs to the CFAP298 family. Interacts with ZMYND10.

The protein localises to the cytoplasm. The protein resides in the cytoskeleton. It is found in the cilium basal body. Functionally, plays a role in motile cilium function, possibly by acting on outer dynein arm assembly. Seems to be important for initiation rather than maintenance of cilium motility. Required for correct positioning of the cilium at the apical cell surface, suggesting an additional role in the planar cell polarity (PCP) pathway. May suppress canonical Wnt signaling activity. This chain is Cilia- and flagella-associated protein 298, found in Homo sapiens (Human).